A 245-amino-acid polypeptide reads, in one-letter code: rRNA adenine N-6-methyltransferase (245 aa).

S-adenosyl-L-methionine-binding residues include Asn-10, Leu-12, Gly-37, Glu-58, Asp-83, and Asn-100.

Belongs to the class I-like SAM-binding methyltransferase superfamily. rRNA adenine N(6)-methyltransferase family.

It carries out the reaction adenosine(2085) in 23S rRNA + 2 S-adenosyl-L-methionine = N(6)-dimethyladenosine(2085) in 23S rRNA + 2 S-adenosyl-L-homocysteine + 2 H(+). This protein produces a dimethylation of the adenine residue at position 2085 in 23S rRNA, resulting in reduced affinity between ribosomes and macrolide-lincosamide-streptogramin B antibiotics. The chain is rRNA adenine N-6-methyltransferase (ermB) from Enterococcus faecalis (strain ATCC 700802 / V583).